We begin with the raw amino-acid sequence, 344 residues long: tRNA N6-adenosine threonylcarbamoyltransferase (344 aa).

Residues His113 and His117 each contribute to the Fe cation site. Substrate-binding positions include 135–139, Asp169, Gly182, Asp186, and Asn278; that span reads LVSGG. Asp306 serves as a coordination point for Fe cation. The interval 325–344 is disordered; that stretch reads ESPISVGTDPSLSVETPQVF. The segment covering 326–344 has biased composition (polar residues); that stretch reads SPISVGTDPSLSVETPQVF.

Belongs to the KAE1 / TsaD family. Fe(2+) serves as cofactor.

Its subcellular location is the cytoplasm. It carries out the reaction L-threonylcarbamoyladenylate + adenosine(37) in tRNA = N(6)-L-threonylcarbamoyladenosine(37) in tRNA + AMP + H(+). Required for the formation of a threonylcarbamoyl group on adenosine at position 37 (t(6)A37) in tRNAs that read codons beginning with adenine. Is involved in the transfer of the threonylcarbamoyl moiety of threonylcarbamoyl-AMP (TC-AMP) to the N6 group of A37, together with TsaE and TsaB. TsaD likely plays a direct catalytic role in this reaction. The chain is tRNA N6-adenosine threonylcarbamoyltransferase from Corynebacterium glutamicum (strain ATCC 13032 / DSM 20300 / JCM 1318 / BCRC 11384 / CCUG 27702 / LMG 3730 / NBRC 12168 / NCIMB 10025 / NRRL B-2784 / 534).